The following is a 401-amino-acid chain: S-adenosylmethionine synthase (401 aa).

Gly136 to Asp141 contributes to the ATP binding site. Positions Gly278–Ser305 are disordered.

Belongs to the AdoMet synthase 2 family. Requires Mg(2+) as cofactor.

It carries out the reaction L-methionine + ATP + H2O = S-adenosyl-L-methionine + phosphate + diphosphate. It functions in the pathway amino-acid biosynthesis; S-adenosyl-L-methionine biosynthesis; S-adenosyl-L-methionine from L-methionine: step 1/1. Its function is as follows. Catalyzes the formation of S-adenosylmethionine from methionine and ATP. In Methanococcoides burtonii (strain DSM 6242 / NBRC 107633 / OCM 468 / ACE-M), this protein is S-adenosylmethionine synthase.